A 164-amino-acid chain; its full sequence is S-ribosylhomocysteine lyase (164 aa).

Positions 54, 58, and 128 each coordinate Fe cation.

This sequence belongs to the LuxS family. In terms of assembly, homodimer. Requires Fe cation as cofactor.

The enzyme catalyses S-(5-deoxy-D-ribos-5-yl)-L-homocysteine = (S)-4,5-dihydroxypentane-2,3-dione + L-homocysteine. Its function is as follows. Involved in the synthesis of autoinducer 2 (AI-2) which is secreted by bacteria and is used to communicate both the cell density and the metabolic potential of the environment. The regulation of gene expression in response to changes in cell density is called quorum sensing. Catalyzes the transformation of S-ribosylhomocysteine (RHC) to homocysteine (HC) and 4,5-dihydroxy-2,3-pentadione (DPD). In Campylobacter jejuni subsp. jejuni serotype O:6 (strain 81116 / NCTC 11828), this protein is S-ribosylhomocysteine lyase.